The chain runs to 266 residues: Glucosamine-6-phosphate deaminase (266 aa).

Residue aspartate 72 is the Proton acceptor; for enolization step of the active site. The For ring-opening step role is filled by aspartate 141. The active-site Proton acceptor; for ring-opening step is the histidine 143. Glutamate 148 serves as the catalytic For ring-opening step.

Belongs to the glucosamine/galactosamine-6-phosphate isomerase family. NagB subfamily. Homohexamer; trimer of disulfide-linked dimers.

The enzyme catalyses alpha-D-glucosamine 6-phosphate + H2O = beta-D-fructose 6-phosphate + NH4(+). The protein operates within amino-sugar metabolism; N-acetylneuraminate degradation; D-fructose 6-phosphate from N-acetylneuraminate: step 5/5. With respect to regulation, allosterically activated by N-acetylglucosamine 6-phosphate (GlcNAc6P). Functionally, catalyzes the reversible isomerization-deamination of glucosamine 6-phosphate (GlcN6P) to form fructose 6-phosphate (Fru6P) and ammonium ion. This Shigella dysenteriae serotype 1 (strain Sd197) protein is Glucosamine-6-phosphate deaminase.